The chain runs to 84 residues: Succinate dehydrogenase membrane anchor subunit (84 aa).

The Mitochondrial matrix segment spans residues 1–3 (MIT). A helical transmembrane segment spans residues 4-24 (FQWLIVRVVALFISLTILIDI). Over 25-31 (EMFVVML) the chain is Mitochondrial intermembrane. Residues 32 to 52 (SFLIIHISIGLKAIIHDYIHF) traverse the membrane as a helical segment. A heme-binding site is contributed by His37. Tyr49 lines the a ubiquinone pocket. Residues 53–58 (QKIKLM) are Mitochondrial matrix-facing. The chain crosses the membrane as a helical span at residues 59 to 81 (LLILLRVSAIEISRSFRTFYIII). At 82-84 (KNT) the chain is on the mitochondrial intermembrane side.

In terms of assembly, part of an enzyme complex containing four subunits: a flavoprotein, an iron-sulfur protein, plus two membrane-anchoring proteins. Heme is required as a cofactor.

Its subcellular location is the mitochondrion inner membrane. The protein operates within carbohydrate metabolism; tricarboxylic acid cycle. Functionally, membrane-anchoring subunit of succinate dehydrogenase (SDH). The sequence is that of Succinate dehydrogenase membrane anchor subunit (SDH4) from Chondrus crispus (Carrageen Irish moss).